The chain runs to 397 residues: Acetate kinase (397 aa).

Mg(2+) is bound at residue Asn8. Lys15 is an ATP binding site. Arg89 provides a ligand contact to substrate. Asp146 (proton donor/acceptor) is an active-site residue. Residues 206 to 210, 280 to 282, and 328 to 332 contribute to the ATP site; these read HLGNG, DMR, and GVGEN. Mg(2+) is bound at residue Glu382.

It belongs to the acetokinase family. Homodimer. The cofactor is Mg(2+). Mn(2+) serves as cofactor.

The protein localises to the cytoplasm. The enzyme catalyses acetate + ATP = acetyl phosphate + ADP. Its pathway is metabolic intermediate biosynthesis; acetyl-CoA biosynthesis; acetyl-CoA from acetate: step 1/2. Functionally, catalyzes the formation of acetyl phosphate from acetate and ATP. Can also catalyze the reverse reaction. This chain is Acetate kinase, found in Leifsonia xyli subsp. xyli (strain CTCB07).